The primary structure comprises 298 residues: Tyrosine recombinase XerC (298 aa).

A Core-binding (CB) domain is found at 2 to 88 (TDLHTDVERY…ALRSFFDWLV (87 aa)). The Tyr recombinase domain maps to 109–288 (HLPKNIDVDD…DFQHLASVYD (180 aa)). Catalysis depends on residues arginine 148, lysine 172, histidine 240, arginine 243, and histidine 266. Tyrosine 275 functions as the O-(3'-phospho-DNA)-tyrosine intermediate in the catalytic mechanism.

Belongs to the 'phage' integrase family. XerC subfamily. Forms a cyclic heterotetrameric complex composed of two molecules of XerC and two molecules of XerD, in which XerC interacts with XerD via its C-terminal region, XerD interacts with XerC via its C-terminal region and so on.

The protein localises to the cytoplasm. Its activity is regulated as follows. FtsK may regulate the catalytic switch between XerC and XerD in the heterotetrameric complex during the two steps of the recombination process. In terms of biological role, site-specific tyrosine recombinase, which acts by catalyzing the cutting and rejoining of the recombining DNA molecules. Binds cooperatively to specific DNA consensus sequences that are separated from XerD binding sites by a short central region, forming the heterotetrameric XerC-XerD complex that recombines DNA substrates. The complex is essential to convert dimers of the bacterial chromosome into monomers to permit their segregation at cell division. It also contributes to the segregational stability of plasmids. In the complex XerC specifically exchanges the top DNA strands. This chain is Tyrosine recombinase XerC, found in Escherichia coli O157:H7.